The primary structure comprises 202 residues: N-acetyltransferase 9-like protein (202 aa).

An N-acetyltransferase domain is found at 34–184 (EEIRRLTGSE…FTFELPKNRL (151 aa)).

Belongs to the acetyltransferase family. GNAT subfamily.

This chain is N-acetyltransferase 9-like protein, found in Caenorhabditis elegans.